Reading from the N-terminus, the 424-residue chain is CinA-like protein (424 aa).

Belongs to the CinA family.

In Shewanella frigidimarina (strain NCIMB 400), this protein is CinA-like protein.